The following is a 78-amino-acid chain: Acyl carrier protein (78 aa).

Residues 2 to 77 (STIEESVKSI…AAIDFIKESK (76 aa)) enclose the Carrier domain. An O-(pantetheine 4'-phosphoryl)serine modification is found at serine 37.

This sequence belongs to the acyl carrier protein (ACP) family. In terms of processing, 4'-phosphopantetheine is transferred from CoA to a specific serine of apo-ACP by AcpS. This modification is essential for activity because fatty acids are bound in thioester linkage to the sulfhydryl of the prosthetic group.

It localises to the cytoplasm. It functions in the pathway lipid metabolism; fatty acid biosynthesis. Functionally, carrier of the growing fatty acid chain in fatty acid biosynthesis. This chain is Acyl carrier protein, found in Wigglesworthia glossinidia brevipalpis.